A 313-amino-acid chain; its full sequence is Putative olfactory receptor 2B3 (313 aa).

Over 1–25 (MNWENESSPKEFILLGFSDRAWLQM) the chain is Extracellular. N-linked (GlcNAc...) asparagine glycosylation occurs at Asn-5. The chain crosses the membrane as a helical span at residues 26-49 (PLFVVLLISYTITIFGNVSIMMVC). The Cytoplasmic portion of the chain corresponds to 50–57 (ILDPKLHT). Residues 58-79 (PMYFFLTNLSILDLCYTTTTVP) form a helical membrane-spanning segment. Residues 80–100 (HMLVNIGCNKKTISYAGCVAH) are Extracellular-facing. A disulfide bridge connects residues Cys-97 and Cys-189. Residues 101–120 (LIIFLALGATECLLLAVMSF) traverse the membrane as a helical segment. Topologically, residues 121–139 (DRYVAVCRPLHYVVIMNYW) are cytoplasmic. Residues 140 to 158 (FCLRMAAFSWLIGFGNSVL) traverse the membrane as a helical segment. Topologically, residues 159 to 195 (QSSLTLNMPRCGHQEVDHFFCEVPALLKLSCADTKPI) are extracellular. A helical membrane pass occupies residues 196–219 (EAELFFFSVLILLIPVTLILISYG). Residues 220–236 (FIAQAVLKIRSAEGRQK) are Cytoplasmic-facing. The chain crosses the membrane as a helical span at residues 237–259 (AFGTCGSHMIVVSLFYGTAIYMY). Topologically, residues 260-272 (LQPPSSTSKDWGK) are extracellular. A helical transmembrane segment spans residues 273–292 (MVSLFYGIITSMLNSLIYSL). Topologically, residues 293–313 (RNKDMKEAFKRLMPRIFFCKK) are cytoplasmic.

This sequence belongs to the G-protein coupled receptor 1 family.

The protein localises to the cell membrane. Odorant receptor. The sequence is that of Putative olfactory receptor 2B3 (OR2B3) from Homo sapiens (Human).